The following is a 176-amino-acid chain: Adipose-secreted signaling protein (176 aa).

The disordered stretch occupies residues 1–30 (MATAGKGSKGKGTGVRFTPEGTQGHPQEGT). Over residues 20–30 (EGTQGHPQEGT) the composition is skewed to polar residues.

Belongs to the ADISSP family.

Functionally, may be involved in thermogenesis and glucose homeostasis. The protein is Adipose-secreted signaling protein of Taeniopygia guttata (Zebra finch).